A 209-amino-acid chain; its full sequence is Holliday junction branch migration complex subunit RuvA (209 aa).

Residues 1–64 form a domain I region; that stretch reads MIGKLKGLVD…EDSIKLYGFA (64 aa). The domain II stretch occupies residues 65 to 143; it reads SETEREWFRL…ALGASLHTLA (79 aa). The tract at residues 144 to 154 is flexible linker; it reads GAGSEGAGVEA. Positions 155–209 are domain III; the sequence is PASGAVSDAISVLVNLGFGRSQAAVAVAASSKALGSGAGAGDLAKRALQELAQSG.

The protein belongs to the RuvA family. As to quaternary structure, homotetramer. Forms an RuvA(8)-RuvB(12)-Holliday junction (HJ) complex. HJ DNA is sandwiched between 2 RuvA tetramers; dsDNA enters through RuvA and exits via RuvB. An RuvB hexamer assembles on each DNA strand where it exits the tetramer. Each RuvB hexamer is contacted by two RuvA subunits (via domain III) on 2 adjacent RuvB subunits; this complex drives branch migration. In the full resolvosome a probable DNA-RuvA(4)-RuvB(12)-RuvC(2) complex forms which resolves the HJ.

It localises to the cytoplasm. The RuvA-RuvB-RuvC complex processes Holliday junction (HJ) DNA during genetic recombination and DNA repair, while the RuvA-RuvB complex plays an important role in the rescue of blocked DNA replication forks via replication fork reversal (RFR). RuvA specifically binds to HJ cruciform DNA, conferring on it an open structure. The RuvB hexamer acts as an ATP-dependent pump, pulling dsDNA into and through the RuvAB complex. HJ branch migration allows RuvC to scan DNA until it finds its consensus sequence, where it cleaves and resolves the cruciform DNA. In Methylocella silvestris (strain DSM 15510 / CIP 108128 / LMG 27833 / NCIMB 13906 / BL2), this protein is Holliday junction branch migration complex subunit RuvA.